Reading from the N-terminus, the 68-residue chain is Probable Sec-independent protein translocase protein TatE (68 aa).

Residues 1–21 (MGEISITKLLVVAALIILVFG) form a helical membrane-spanning segment. Positions 43–68 (MNEDDDSAKKTTAEEEAPAQKLSHKE) are disordered.

This sequence belongs to the TatA/E family. TatE subfamily.

It is found in the cell inner membrane. Its function is as follows. Part of the twin-arginine translocation (Tat) system that transports large folded proteins containing a characteristic twin-arginine motif in their signal peptide across membranes. TatE shares overlapping functions with TatA. This is Probable Sec-independent protein translocase protein TatE from Klebsiella pneumoniae subsp. pneumoniae (strain ATCC 700721 / MGH 78578).